The primary structure comprises 273 residues: Orotidine 5'-phosphate decarboxylase (273 aa).

The active-site Proton donor is K97.

This sequence belongs to the OMP decarboxylase family. Type 2 subfamily.

The enzyme catalyses orotidine 5'-phosphate + H(+) = UMP + CO2. Its pathway is pyrimidine metabolism; UMP biosynthesis via de novo pathway; UMP from orotate: step 2/2. The polypeptide is Orotidine 5'-phosphate decarboxylase (Cellvibrio japonicus (strain Ueda107) (Pseudomonas fluorescens subsp. cellulosa)).